Here is a 213-residue protein sequence, read N- to C-terminus: Sclerostin (213 aa).

The first 23 residues, 1–23, serve as a signal peptide directing secretion; it reads MQLPLALCLVCLLVHTAFRVVEG. Residues 41–71 are disordered; sequence GEYPEPPPELENNKTMNRAENGGRPPHHPFE. Residue asparagine 53 is glycosylated (N-linked (GlcNAc...) asparagine). 4 disulfides stabilise this stretch: cysteine 80–cysteine 134, cysteine 94–cysteine 148, cysteine 105–cysteine 165, and cysteine 109–cysteine 167. Positions 82-172 constitute a CTCK domain; it reads ELHFTRYVTD…ASCKCKRLTR (91 aa). Asparagine 175 carries N-linked (GlcNAc...) asparagine glycosylation. A disordered region spans residues 178-213; it reads ELKDFGTEAARPQKGRKPRPRARSAKANQAELENAY. Residues 190 to 201 are compositionally biased toward basic residues; the sequence is QKGRKPRPRARS.

The protein belongs to the sclerostin family. Interacts with LRP4 (via the extracellular domain); the interaction facilitates the inhibition of Wnt signaling. Interacts with LRP5 (via the first two YWTD-EGF repeat domains); the interaction inhibits Wnt-mediated signaling. Interacts with LRP6. In terms of tissue distribution, widely expressed at low levels with highest levels in bone, cartilage, kidney, liver, bone marrow and primary osteoblasts differentiated for 21 days. Detected in the subendothelial layer of the aortic intima (at protein level).

It is found in the secreted. It localises to the extracellular space. The protein localises to the extracellular matrix. Its function is as follows. Negative regulator of bone growth that acts through inhibition of Wnt signaling and bone formation. This Homo sapiens (Human) protein is Sclerostin.